The following is a 171-amino-acid chain: tRNA-splicing endonuclease subunit Sen15 (171 aa).

The interval 1-35 is disordered; sequence MEERGDSEPTPGCSGLGPGGVRGFGDGGGAPSWAP. Residue S7 is modified to Phosphoserine. The segment covering 14–30 has biased composition (gly residues); the sequence is SGLGPGGVRGFGDGGGA. S168 bears the Phosphoserine mark.

Belongs to the SEN15 family. As to quaternary structure, homodimer. tRNA splicing endonuclease is a heterotetramer composed of TSEN2, TSEN15, TSEN34/LENG5 and TSEN54. tRNA splicing endonuclease complex also contains proteins of the Pre-mRNA 3' end processing machinery, such as CLP1, CPSF1, CPSF4 and CSTF2. In terms of tissue distribution, widely expressed. Highly expressed in testis and uterus.

The protein localises to the nucleus. It is found in the nucleolus. Non-catalytic subunit of the tRNA-splicing endonuclease complex, a complex responsible for identification and cleavage of the splice sites in pre-tRNA. It cleaves pre-tRNA at the 5' and 3' splice sites to release the intron. The products are an intron and two tRNA half-molecules bearing 2',3' cyclic phosphate and 5'-OH termini. There are no conserved sequences at the splice sites, but the intron is invariably located at the same site in the gene, placing the splice sites an invariant distance from the constant structural features of the tRNA body. The tRNA splicing endonuclease is also involved in mRNA processing via its association with pre-mRNA 3'-end processing factors, establishing a link between pre-tRNA splicing and pre-mRNA 3'-end formation, suggesting that the endonuclease subunits function in multiple RNA-processing events. In Homo sapiens (Human), this protein is tRNA-splicing endonuclease subunit Sen15 (TSEN15).